The primary structure comprises 483 residues: MHQKTIAELKQDLRDKTISSVELTQHFLDRIKTINPTLNSFISITEEYALTQAKAADARLAKGEATSLTGIPIAQKDIFCTKDIKTSCGSKMLDNFIAPYDATVVEQLNKAGAILIGKTNMDEFAMGSSNENSYFGAVKNPWDLERVPGGSSGGSAAAVAARLVPGATGTDTGGSIRQPAALCGITGLKPTYGRVSRYGMIAFASSLDQAGPMAQTAEDAALLLNALAGHDAKDSTSINKNVPDYTATLTTSLEGLKVGLPKEYFGEGLNSSIAESIETVKKTLEKMGATFIEIQLPHTDFAAPAYYVLAPAECSSNLARYDGVRYGYRCDKPVDLDDLYKRSRTEGFGSEVKRRIMIGTYVLSAGYYDAYYLKAQKIRRLIRDDFMKAFETVDVILTPATPTPAFKLNEKIADPVAMYLSDVYTIAVNLAGLPAIAFPAGFMDQLPIGAQLIGNYFEEARLLNITHRYQQETDWHKQSPKLR.

Active-site charge relay system residues include Lys-76 and Ser-151. Ser-175 functions as the Acyl-ester intermediate in the catalytic mechanism.

It belongs to the amidase family. GatA subfamily. Heterotrimer of A, B and C subunits.

It catalyses the reaction L-glutamyl-tRNA(Gln) + L-glutamine + ATP + H2O = L-glutaminyl-tRNA(Gln) + L-glutamate + ADP + phosphate + H(+). Its function is as follows. Allows the formation of correctly charged Gln-tRNA(Gln) through the transamidation of misacylated Glu-tRNA(Gln) in organisms which lack glutaminyl-tRNA synthetase. The reaction takes place in the presence of glutamine and ATP through an activated gamma-phospho-Glu-tRNA(Gln). This is Glutamyl-tRNA(Gln) amidotransferase subunit A from Coxiella burnetii (strain CbuK_Q154) (Coxiella burnetii (strain Q154)).